The primary structure comprises 921 residues: Isoleucine--tRNA ligase (921 aa).

The 'HIGH' region motif lies at 57 to 67 (PYANGDIHMGH). Residue E552 participates in L-isoleucyl-5'-AMP binding. Positions 593–597 (KMSKS) match the 'KMSKS' region motif. Residue K596 coordinates ATP. Residues C888, C891, C908, and C911 each contribute to the Zn(2+) site.

Belongs to the class-I aminoacyl-tRNA synthetase family. IleS type 1 subfamily. As to quaternary structure, monomer. It depends on Zn(2+) as a cofactor.

Its subcellular location is the cytoplasm. The catalysed reaction is tRNA(Ile) + L-isoleucine + ATP = L-isoleucyl-tRNA(Ile) + AMP + diphosphate. Catalyzes the attachment of isoleucine to tRNA(Ile). As IleRS can inadvertently accommodate and process structurally similar amino acids such as valine, to avoid such errors it has two additional distinct tRNA(Ile)-dependent editing activities. One activity is designated as 'pretransfer' editing and involves the hydrolysis of activated Val-AMP. The other activity is designated 'posttransfer' editing and involves deacylation of mischarged Val-tRNA(Ile). This Bacillus anthracis (strain A0248) protein is Isoleucine--tRNA ligase.